Here is a 218-residue protein sequence, read N- to C-terminus: Molybdenum cofactor guanylyltransferase (218 aa).

Residues 16–18 (LAG), Lys-28, Asn-56, Asp-74, and Asp-109 each bind GTP. Asp-109 lines the Mg(2+) pocket.

Belongs to the MobA family. Monomer. Requires Mg(2+) as cofactor.

Its subcellular location is the cytoplasm. The catalysed reaction is Mo-molybdopterin + GTP + H(+) = Mo-molybdopterin guanine dinucleotide + diphosphate. In terms of biological role, transfers a GMP moiety from GTP to Mo-molybdopterin (Mo-MPT) cofactor (Moco or molybdenum cofactor) to form Mo-molybdopterin guanine dinucleotide (Mo-MGD) cofactor. The protein is Molybdenum cofactor guanylyltransferase of Rhizobium meliloti (strain 1021) (Ensifer meliloti).